Reading from the N-terminus, the 94-residue chain is MAVLTDDQVDAALPELGGWERADGALRRSVKFPAFLDGIEAVRRVAERAEAKDHHPDIDIRWRTVTFVLVTHSEGGITEKDLQMAREIDEILDR.

The protein belongs to the pterin-4-alpha-carbinolamine dehydratase family.

The enzyme catalyses (4aS,6R)-4a-hydroxy-L-erythro-5,6,7,8-tetrahydrobiopterin = (6R)-L-erythro-6,7-dihydrobiopterin + H2O. This chain is Putative pterin-4-alpha-carbinolamine dehydratase, found in Mycobacterium sp. (strain KMS).